The sequence spans 574 residues: MANPPHGGVLKDLLARDAPRHDELEIEAEQLPAIVLTERQLCDLELIMNGGFSPLEGFMNQKDYDSVCENVRLADGNLFSMPITLDVSQAVIDDGKLKPGSRVTLRDFRDDRNLAILTIDDIYRPDKAKEAKLVFGGDEEHPAIKYLYNKVQEFYVGGKIEAINKLNHYDYVALRYTPAELRVHFDKLGWNRVVAFQTRNPMHRAHRELTVRAARARQANVLIHPVVGLTKPGDIDHFTRVRAYQALLPRYPNGMAVLGLLGLAMRMGGPREAIWHAIIRKNHGATHFIVGRDHAGPGKNSKGQEFYGPYDAQHAVEKYREELGIEVVEFQQVTYLPDTDEYKPKDEVPAGVKTLDISGTELRNRLRTGAPIPEWFSYPEVVKILRESSPPRHTQGFTIFLTGYMNSGKDAIARALQVTLNQQGGRSVSLLLGDTVRHELSSELGFSREDRHTNIQRIAFVAGELTRAGAAVIASPIAPYEESRNAARDAVTQAGGNFFLVHVATPLEYCEKTDKRGIYAKARRGEIKGFTGVDDPYETPSKADLTVDVSKQTVRSIVHEIILMLETEGFFDRS.

Residues 1–169 form an N-terminal region; the sequence is MANPPHGGVL…IEAINKLNHY (169 aa). The tract at residues 170–394 is catalytic; that stretch reads DYVALRYTPA…LRESSPPRHT (225 aa). Q197 serves as a coordination point for sulfate. ATP is bound by residues 197 to 200 and 291 to 294; these read QTRN and GRDH. Residues T198, R199, and N200 contribute to the active site. R199 lines the sulfate pocket. A295 is a binding site for sulfate. Residue V333 coordinates ATP. The interval 395 to 574 is allosteric regulation domain; adenylyl-sulfate kinase-like; that stretch reads QGFTIFLTGY…LETEGFFDRS (180 aa). 3'-phosphoadenylyl sulfate-binding positions include 434–437, R451, 477–478, and R516; these read DTVR and IA.

In the N-terminal section; belongs to the sulfate adenylyltransferase family. It in the C-terminal section; belongs to the APS kinase family. As to quaternary structure, homohexamer. Dimer of trimers.

It localises to the cytoplasm. It carries out the reaction sulfate + ATP + H(+) = adenosine 5'-phosphosulfate + diphosphate. It functions in the pathway sulfur metabolism; hydrogen sulfide biosynthesis; sulfite from sulfate: step 1/3. Allosterically inhibited by 3'-phosphoadenosine 5'-phosphosulfate (PAPS). Its function is as follows. Catalyzes the first intracellular reaction of sulfate assimilation, forming adenosine-5'-phosphosulfate (APS) from inorganic sulfate and ATP. Plays an important role in sulfate activation as a component of the biosynthesis pathway of sulfur-containing amino acids. The protein is Sulfate adenylyltransferase of Neosartorya fischeri (strain ATCC 1020 / DSM 3700 / CBS 544.65 / FGSC A1164 / JCM 1740 / NRRL 181 / WB 181) (Aspergillus fischerianus).